A 131-amino-acid polypeptide reads, in one-letter code: Small ribosomal subunit protein bS6 (131 aa).

The interval Glu-98–Glu-131 is disordered. A compositionally biased stretch (basic and acidic residues) spans Lys-104 to Phe-116. Over residues Thr-120–Glu-131 the composition is skewed to acidic residues.

It belongs to the bacterial ribosomal protein bS6 family.

Binds together with bS18 to 16S ribosomal RNA. This is Small ribosomal subunit protein bS6 from Cronobacter sakazakii (strain ATCC BAA-894) (Enterobacter sakazakii).